The chain runs to 100 residues: NAD(P)H-quinone oxidoreductase subunit 4L, chloroplastic (100 aa).

3 helical membrane passes run 1-21 (MLEH…FGLI), 29-49 (ALMC…TFSN), and 60-80 (IFAI…LAIV).

This sequence belongs to the complex I subunit 4L family. NDH is composed of at least 16 different subunits, 5 of which are encoded in the nucleus.

The protein localises to the plastid. Its subcellular location is the chloroplast thylakoid membrane. It catalyses the reaction a plastoquinone + NADH + (n+1) H(+)(in) = a plastoquinol + NAD(+) + n H(+)(out). The enzyme catalyses a plastoquinone + NADPH + (n+1) H(+)(in) = a plastoquinol + NADP(+) + n H(+)(out). Functionally, NDH shuttles electrons from NAD(P)H:plastoquinone, via FMN and iron-sulfur (Fe-S) centers, to quinones in the photosynthetic chain and possibly in a chloroplast respiratory chain. The immediate electron acceptor for the enzyme in this species is believed to be plastoquinone. Couples the redox reaction to proton translocation, and thus conserves the redox energy in a proton gradient. This chain is NAD(P)H-quinone oxidoreductase subunit 4L, chloroplastic, found in Physcomitrium patens (Spreading-leaved earth moss).